Reading from the N-terminus, the 334-residue chain is Holliday junction branch migration complex subunit RuvB (334 aa).

The tract at residues 1–182 (MNERMVDQSM…FGVHLRLEYY (182 aa)) is large ATPase domain (RuvB-L). Residues leucine 21, arginine 22, glycine 63, lysine 66, threonine 67, threonine 68, 129–131 (EDF), arginine 172, tyrosine 182, and arginine 219 contribute to the ATP site. Threonine 67 lines the Mg(2+) pocket. Residues 183 to 253 (NESDLKEIII…TTKHALGLLQ (71 aa)) form a small ATPAse domain (RuvB-S) region. Positions 256–334 (QHGLDYIDHK…HFAKSNEERE (79 aa)) are head domain (RuvB-H). Residues arginine 292, arginine 311, and arginine 316 each coordinate DNA.

The protein belongs to the RuvB family. As to quaternary structure, homohexamer. Forms an RuvA(8)-RuvB(12)-Holliday junction (HJ) complex. HJ DNA is sandwiched between 2 RuvA tetramers; dsDNA enters through RuvA and exits via RuvB. An RuvB hexamer assembles on each DNA strand where it exits the tetramer. Each RuvB hexamer is contacted by two RuvA subunits (via domain III) on 2 adjacent RuvB subunits; this complex drives branch migration. In the full resolvosome a probable DNA-RuvA(4)-RuvB(12)-RuvC(2) complex forms which resolves the HJ.

The protein resides in the cytoplasm. The enzyme catalyses ATP + H2O = ADP + phosphate + H(+). Its function is as follows. The RuvA-RuvB-RuvC complex processes Holliday junction (HJ) DNA during genetic recombination and DNA repair, while the RuvA-RuvB complex plays an important role in the rescue of blocked DNA replication forks via replication fork reversal (RFR). RuvA specifically binds to HJ cruciform DNA, conferring on it an open structure. The RuvB hexamer acts as an ATP-dependent pump, pulling dsDNA into and through the RuvAB complex. RuvB forms 2 homohexamers on either side of HJ DNA bound by 1 or 2 RuvA tetramers; 4 subunits per hexamer contact DNA at a time. Coordinated motions by a converter formed by DNA-disengaged RuvB subunits stimulates ATP hydrolysis and nucleotide exchange. Immobilization of the converter enables RuvB to convert the ATP-contained energy into a lever motion, pulling 2 nucleotides of DNA out of the RuvA tetramer per ATP hydrolyzed, thus driving DNA branch migration. The RuvB motors rotate together with the DNA substrate, which together with the progressing nucleotide cycle form the mechanistic basis for DNA recombination by continuous HJ branch migration. Branch migration allows RuvC to scan DNA until it finds its consensus sequence, where it cleaves and resolves cruciform DNA. This chain is Holliday junction branch migration complex subunit RuvB, found in Staphylococcus aureus (strain bovine RF122 / ET3-1).